Reading from the N-terminus, the 390-residue chain is Succinate--CoA ligase [ADP-forming] subunit beta (390 aa).

The ATP-grasp domain maps to 9–245 (KELLSRYGLP…KSQENEREVK (237 aa)). ATP contacts are provided by residues Lys46, 53–55 (GRG), Glu100, Tyr103, and Glu108. Mg(2+) is bound by residues Asn200 and Asp214. Substrate contacts are provided by residues Asn265 and 322-324 (GIV).

Belongs to the succinate/malate CoA ligase beta subunit family. Heterotetramer of two alpha and two beta subunits. Mg(2+) is required as a cofactor.

It catalyses the reaction succinate + ATP + CoA = succinyl-CoA + ADP + phosphate. The catalysed reaction is GTP + succinate + CoA = succinyl-CoA + GDP + phosphate. It functions in the pathway carbohydrate metabolism; tricarboxylic acid cycle; succinate from succinyl-CoA (ligase route): step 1/1. In terms of biological role, succinyl-CoA synthetase functions in the citric acid cycle (TCA), coupling the hydrolysis of succinyl-CoA to the synthesis of either ATP or GTP and thus represents the only step of substrate-level phosphorylation in the TCA. The beta subunit provides nucleotide specificity of the enzyme and binds the substrate succinate, while the binding sites for coenzyme A and phosphate are found in the alpha subunit. In Chromobacterium violaceum (strain ATCC 12472 / DSM 30191 / JCM 1249 / CCUG 213 / NBRC 12614 / NCIMB 9131 / NCTC 9757 / MK), this protein is Succinate--CoA ligase [ADP-forming] subunit beta.